The sequence spans 368 residues: Glucose 1-dehydrogenase 2 (368 aa).

Cys41 is a Zn(2+) binding site. Thr43 is a binding site for substrate. 2 residues coordinate Zn(2+): His68 and Glu69. Asn91 is a binding site for substrate. Zn(2+)-binding residues include Cys95, Cys98, Cys101, Cys109, and Gln152. Gln152 and Asp156 together coordinate substrate. NADP(+) contacts are provided by residues 213 to 215 (NRR), 279 to 281 (FGF), 307 to 309 (LDN), and Lys356. A substrate-binding site is contributed by Asn309.

It belongs to the zinc-containing alcohol dehydrogenase family. Glucose 1-dehydrogenase subfamily. Zn(2+) is required as a cofactor.

The catalysed reaction is D-glucose + NAD(+) = D-glucono-1,5-lactone + NADH + H(+). It catalyses the reaction D-glucose + NADP(+) = D-glucono-1,5-lactone + NADPH + H(+). Its function is as follows. Catalyzes the NAD(P)(+)-dependent oxidation of D-glucose to D-gluconate via gluconolactone. Can utilize both NAD(+) and NADP(+) as electron acceptor. Is involved in the degradation of glucose through a non-phosphorylative variant of the Entner-Doudoroff pathway. This is Glucose 1-dehydrogenase 2 from Saccharolobus solfataricus (strain ATCC 35092 / DSM 1617 / JCM 11322 / P2) (Sulfolobus solfataricus).